A 1135-amino-acid chain; its full sequence is Receptor-type guanylate cyclase gcy-4 (1135 aa).

The signal sequence occupies residues methionine 1 to serine 20. The Extracellular portion of the chain corresponds to glutamine 21–arginine 483. N-linked (GlcNAc...) asparagine glycans are attached at residues asparagine 37, asparagine 193, asparagine 209, asparagine 251, asparagine 349, asparagine 375, asparagine 431, asparagine 436, and asparagine 447. A helical transmembrane segment spans residues leucine 484–leucine 504. Residues threonine 505 to serine 1135 are Cytoplasmic-facing. Residues lysine 535–phenylalanine 560 form a disordered region. Residues asparagine 545–serine 837 enclose the Protein kinase domain. Positions serine 546–phenylalanine 560 are enriched in low complexity. The region spanning threonine 895–glutamate 1025 is the Guanylate cyclase domain.

It belongs to the adenylyl cyclase class-4/guanylyl cyclase family. As to expression, expressed bilaterally in ASE neurons.

It localises to the cell membrane. It carries out the reaction GTP = 3',5'-cyclic GMP + diphosphate. Guanylate cyclase involved in the production of the second messenger cGMP. Regulates chemotaxis responses toward salt ions in ASE sensory neurons. The protein is Receptor-type guanylate cyclase gcy-4 of Caenorhabditis briggsae.